The chain runs to 178 residues: Large ribosomal subunit protein uL6 (178 aa).

The protein belongs to the universal ribosomal protein uL6 family. In terms of assembly, part of the 50S ribosomal subunit.

Its function is as follows. This protein binds to the 23S rRNA, and is important in its secondary structure. It is located near the subunit interface in the base of the L7/L12 stalk, and near the tRNA binding site of the peptidyltransferase center. This Buchnera aphidicola subsp. Acyrthosiphon pisum (strain APS) (Acyrthosiphon pisum symbiotic bacterium) protein is Large ribosomal subunit protein uL6.